A 322-amino-acid chain; its full sequence is Ubiquitin-conjugating enzyme E2 U (322 aa).

The 150-residue stretch at 4–153 folds into the UBC core domain; it reads RAYLLLQRDF…LKLFNRPLQM (150 aa). The active-site Glycyl thioester intermediate is the C89.

This sequence belongs to the ubiquitin-conjugating enzyme family. Post-translationally, autoubiquitinated in vitro in the presence of UBR5.

The enzyme catalyses S-ubiquitinyl-[E1 ubiquitin-activating enzyme]-L-cysteine + [E2 ubiquitin-conjugating enzyme]-L-cysteine = [E1 ubiquitin-activating enzyme]-L-cysteine + S-ubiquitinyl-[E2 ubiquitin-conjugating enzyme]-L-cysteine.. It participates in protein modification; protein ubiquitination. Its function is as follows. Catalyzes the covalent attachment of ubiquitin to other proteins. The sequence is that of Ubiquitin-conjugating enzyme E2 U (UBE2U) from Macaca fascicularis (Crab-eating macaque).